Consider the following 461-residue polypeptide: Photosystem II CP43 reaction center protein (461 aa).

Positions 1–2 are excised as a propeptide; it reads ME. T3 is modified (N-acetylthreonine). T3 carries the post-translational modification Phosphothreonine. A run of 5 helical transmembrane segments spans residues 57–81, 122–143, 166–188, 243–263, and 279–300; these read LFEV…PHLA, LLGP…KDRN, KALY…RKIT, KPFA…LSYS, and WFNN…ASQA. E355 serves as a coordination point for [CaMn4O5] cluster. Residues 435-459 traverse the membrane as a helical segment; the sequence is RARAAAAGFEKGIDRDLEPVLSMTP.

Belongs to the PsbB/PsbC family. PsbC subfamily. In terms of assembly, PSII is composed of 1 copy each of membrane proteins PsbA, PsbB, PsbC, PsbD, PsbE, PsbF, PsbH, PsbI, PsbJ, PsbK, PsbL, PsbM, PsbT, PsbX, PsbY, PsbZ, Psb30/Ycf12, at least 3 peripheral proteins of the oxygen-evolving complex and a large number of cofactors. It forms dimeric complexes. The cofactor is Binds multiple chlorophylls and provides some of the ligands for the Ca-4Mn-5O cluster of the oxygen-evolving complex. It may also provide a ligand for a Cl- that is required for oxygen evolution. PSII binds additional chlorophylls, carotenoids and specific lipids..

It localises to the plastid. The protein resides in the chloroplast thylakoid membrane. Its function is as follows. One of the components of the core complex of photosystem II (PSII). It binds chlorophyll and helps catalyze the primary light-induced photochemical processes of PSII. PSII is a light-driven water:plastoquinone oxidoreductase, using light energy to abstract electrons from H(2)O, generating O(2) and a proton gradient subsequently used for ATP formation. This Ceratophyllum demersum (Rigid hornwort) protein is Photosystem II CP43 reaction center protein.